The sequence spans 202 residues: NADH-ubiquinone oxidoreductase chain 6 (202 aa).

The next 5 helical transmembrane spans lie at 1–21 (MVTM…IMVI), 29–49 (SVFW…LLGV), 52–72 (IALM…LFVI), 96–116 (VPIG…SWLI), and 156–176 (YYLF…AIVL).

It belongs to the complex I subunit 6 family.

It localises to the mitochondrion membrane. It carries out the reaction a ubiquinone + NADH + 5 H(+)(in) = a ubiquinol + NAD(+) + 4 H(+)(out). In terms of biological role, core subunit of the mitochondrial membrane respiratory chain NADH dehydrogenase (Complex I) that is believed to belong to the minimal assembly required for catalysis. Complex I functions in the transfer of electrons from NADH to the respiratory chain. The immediate electron acceptor for the enzyme is believed to be ubiquinone. The protein is NADH-ubiquinone oxidoreductase chain 6 (ND6) of Metridium senile (Brown sea anemone).